The following is a 370-amino-acid chain: Adaptive-response sensory kinase SasA (370 aa).

The Histidine kinase domain occupies 152-365 (MVAHELRTPL…CFYLTVPVWQ (214 aa)). H155 is subject to Phosphohistidine; by autocatalysis.

In terms of assembly, homooligomerizes. Interacts with KaiC. Participates in the KaiBC complex, whose core is composed of a KaiC homohexamer and 6 KaiB.

It catalyses the reaction ATP + protein L-histidine = ADP + protein N-phospho-L-histidine.. Its function is as follows. Member of the two-component regulatory system SasA/RpaA involved in genome-wide circadian gene expression. One of several clock output pathways. Participates in the Kai clock protein complex, the main circadian regulator in cyanobacteria, via its interaction with KaiC. KaiC enhances the autophosphorylation activity of SasA, which then transfers its phosphate group to RpaA to activate it. In addition to its output function, recruits fold-shifted KaiB (KaiB(fs)) to KaiC to cooperatively form the KaiB(6):KaiC(6) complex (independent of SasA kinase activity). Required for robustness of the circadian rhythm of gene expression and is involved in clock output, also required for adaptation to light/dark cycles. The protein is Adaptive-response sensory kinase SasA of Prochlorococcus marinus (strain MIT 9303).